The sequence spans 173 residues: ADP-ribosylation factor-like protein 11 (173 aa).

A lipid anchor (N-myristoyl glycine) is attached at Gly-2. Residues 17–24 (GLDCAGKT), 61–65 (DIGGQ), and 120–123 (NKQE) each bind GTP.

This sequence belongs to the small GTPase superfamily. Arf family.

May play a role in apoptosis. May act as a tumor suppressor. This chain is ADP-ribosylation factor-like protein 11 (Arl11), found in Rattus norvegicus (Rat).